The sequence spans 333 residues: Cytochrome f (333 aa).

Residues 1–16 form the signal peptide; that stretch reads MRNVFRTARLTRSARA. The chain crosses the membrane as a helical span at residues 17-36; sequence IVKTLLIAIATVTFYFTSDL. 4 residues coordinate heme: tyrosine 45, cysteine 66, cysteine 69, and histidine 70. A helical membrane pass occupies residues 299–319; the sequence is VKWMIAFVALVMLAQVMLVLK.

The protein belongs to the cytochrome f family. The 4 large subunits of the cytochrome b6-f complex are cytochrome b6, subunit IV (17 kDa polypeptide, PetD), cytochrome f and the Rieske protein, while the 4 small subunits are PetG, PetL, PetM and PetN. The complex functions as a dimer. Heme is required as a cofactor.

The protein localises to the cellular thylakoid membrane. Component of the cytochrome b6-f complex, which mediates electron transfer between photosystem II (PSII) and photosystem I (PSI), cyclic electron flow around PSI, and state transitions. This chain is Cytochrome f, found in Nostoc punctiforme (strain ATCC 29133 / PCC 73102).